Here is a 956-residue protein sequence, read N- to C-terminus: GAS2-like protein 2B (956 aa).

In terms of domain architecture, Calponin-homology (CH) spans 23-150 (YAMKEDLAEW…CLLELARRAS (128 aa)). One can recognise a GAR domain in the interval 191–263 (CDFKNLDQMV…HYLDKHDPCH (73 aa)). 2 stretches are compositionally biased toward polar residues: residues 332 to 353 (SSSYSLDDNENSPSFKNSQTPP) and 381 to 390 (DPQQLGNPQS). Disordered regions lie at residues 332–361 (SSSYSLDDNENSPSFKNSQTPPNDRRSMSI), 378–406 (DTQDPQQLGNPQSGHYRHHHSTSSLASQL), 853–885 (RPKIRPRRDNRPEKKPSRIPTPVSYRQVPSRNN), and 914–956 (VNSE…ESWV). Over residues 859–868 (RRDNRPEKKP) the composition is skewed to basic and acidic residues.

The protein belongs to the GAS2 family.

The protein resides in the cytoplasm. It localises to the cytoskeleton. Its subcellular location is the cilium basal body. In terms of biological role, together with gas2l2.L, regulates ciliary orientation and performance. In Xenopus laevis (African clawed frog), this protein is GAS2-like protein 2B.